Consider the following 391-residue polypeptide: Formate-dependent phosphoribosylglycinamide formyltransferase (391 aa).

N(1)-(5-phospho-beta-D-ribosyl)glycinamide contacts are provided by residues 20–21 (EL) and Glu-80. ATP is bound by residues Arg-112, Lys-153, 158–163 (SSGKGQ), 193–196 (EGFI), and Glu-201. The region spanning 117 to 306 (RLAAEELGLT…EFALHVRAFT (190 aa)) is the ATP-grasp domain. The Mg(2+) site is built by Glu-265 and Glu-277. N(1)-(5-phospho-beta-D-ribosyl)glycinamide contacts are provided by residues Asp-284, Lys-354, and 361–362 (RR).

It belongs to the PurK/PurT family. Homodimer.

It catalyses the reaction N(1)-(5-phospho-beta-D-ribosyl)glycinamide + formate + ATP = N(2)-formyl-N(1)-(5-phospho-beta-D-ribosyl)glycinamide + ADP + phosphate + H(+). Its pathway is purine metabolism; IMP biosynthesis via de novo pathway; N(2)-formyl-N(1)-(5-phospho-D-ribosyl)glycinamide from N(1)-(5-phospho-D-ribosyl)glycinamide (formate route): step 1/1. Involved in the de novo purine biosynthesis. Catalyzes the transfer of formate to 5-phospho-ribosyl-glycinamide (GAR), producing 5-phospho-ribosyl-N-formylglycinamide (FGAR). Formate is provided by PurU via hydrolysis of 10-formyl-tetrahydrofolate. The polypeptide is Formate-dependent phosphoribosylglycinamide formyltransferase (Vibrio vulnificus (strain CMCP6)).